The following is a 430-amino-acid chain: Asparagine--tRNA ligase (430 aa).

The protein belongs to the class-II aminoacyl-tRNA synthetase family. As to quaternary structure, homodimer.

The protein resides in the cytoplasm. The catalysed reaction is tRNA(Asn) + L-asparagine + ATP = L-asparaginyl-tRNA(Asn) + AMP + diphosphate + H(+). The sequence is that of Asparagine--tRNA ligase from Staphylococcus haemolyticus (strain JCSC1435).